Reading from the N-terminus, the 347-residue chain is Endo-1,4-beta-xylanase 3 (347 aa).

Positions 1 to 16 are cleaved as a signal peptide; sequence MKANVILCLLAPLVAA. A propeptide spanning residues 17 to 45 is cleaved from the precursor; it reads LPTETIHLDPELAALRANLTERTADLWDR. Glutamine 46 carries the post-translational modification Pyrrolidone carboxylic acid. The 300-residue stretch at 46-345 folds into the GH10 domain; sequence QASQSIDQLI…KPAYNSIVGI (300 aa). Glutamate 176 acts as the Proton donor in catalysis. Catalysis depends on glutamate 282, which acts as the Nucleophile. A disulfide bond links cysteine 300 and cysteine 306.

The protein belongs to the glycosyl hydrolase 10 (cellulase F) family. In terms of assembly, monomer. Not glycosylated.

It localises to the secreted. It carries out the reaction Endohydrolysis of (1-&gt;4)-beta-D-xylosidic linkages in xylans.. Its pathway is glycan degradation; xylan degradation. In terms of biological role, glycoside hydrolase involved in the hydrolysis of xylan, a major plant cell wall hemicellulose made up of 1,4-beta-linked D-xylopyranose residues. Catalyzes the endohydrolysis of the main-chain 1,4-beta-glycosidic bonds connecting the xylose subunits yielding various xylooligosaccharides and xylose. Produces xylobiose and xylotriose as the main degradation products. The chain is Endo-1,4-beta-xylanase 3 (xyn3) from Hypocrea jecorina (strain QM6a) (Trichoderma reesei).